Here is a 329-residue protein sequence, read N- to C-terminus: DNA-directed RNA polymerase subunit alpha (329 aa).

The interval 1 to 235 (MQGSVTEFLK…EQLDAFVDLR (235 aa)) is alpha N-terminal domain (alpha-NTD). Residues 249 to 329 (FDPILLRPVD…NWPPASIAED (81 aa)) form an alpha C-terminal domain (alpha-CTD) region.

This sequence belongs to the RNA polymerase alpha chain family. Homodimer. The RNAP catalytic core consists of 2 alpha, 1 beta, 1 beta' and 1 omega subunit. When a sigma factor is associated with the core the holoenzyme is formed, which can initiate transcription.

The enzyme catalyses RNA(n) + a ribonucleoside 5'-triphosphate = RNA(n+1) + diphosphate. Its function is as follows. DNA-dependent RNA polymerase catalyzes the transcription of DNA into RNA using the four ribonucleoside triphosphates as substrates. The polypeptide is DNA-directed RNA polymerase subunit alpha (Mannheimia succiniciproducens (strain KCTC 0769BP / MBEL55E)).